The sequence spans 335 residues: Tetraacyldisaccharide 4'-kinase (335 aa).

59 to 66 (TAGGNGKT) contacts ATP.

It belongs to the LpxK family.

It carries out the reaction a lipid A disaccharide + ATP = a lipid IVA + ADP + H(+). The protein operates within glycolipid biosynthesis; lipid IV(A) biosynthesis; lipid IV(A) from (3R)-3-hydroxytetradecanoyl-[acyl-carrier-protein] and UDP-N-acetyl-alpha-D-glucosamine: step 6/6. Its function is as follows. Transfers the gamma-phosphate of ATP to the 4'-position of a tetraacyldisaccharide 1-phosphate intermediate (termed DS-1-P) to form tetraacyldisaccharide 1,4'-bis-phosphate (lipid IVA). This chain is Tetraacyldisaccharide 4'-kinase, found in Vibrio vulnificus (strain YJ016).